The primary structure comprises 217 residues: NADH-quinone oxidoreductase subunit I (217 aa).

The interval 22 to 41 is disordered; that stretch reads TTEQYPEEKKETAPRFHGRH. 2 4Fe-4S ferredoxin-type domains span residues 43–73 and 89–118; these read LNRH…VEGA and RVYQ…MSND. Positions 53, 56, 59, 63, 98, 101, 104, and 108 each coordinate [4Fe-4S] cluster. The segment at 193–217 is disordered; sequence ARRTAGEHSRADEVPAHGAGSERPR.

The protein belongs to the complex I 23 kDa subunit family. In terms of assembly, NDH-1 is composed of 14 different subunits. Subunits NuoA, H, J, K, L, M, N constitute the membrane sector of the complex. The cofactor is [4Fe-4S] cluster.

It is found in the cell membrane. It carries out the reaction a quinone + NADH + 5 H(+)(in) = a quinol + NAD(+) + 4 H(+)(out). NDH-1 shuttles electrons from NADH, via FMN and iron-sulfur (Fe-S) centers, to quinones in the respiratory chain. The immediate electron acceptor for the enzyme in this species is believed to be ubiquinone. Couples the redox reaction to proton translocation (for every two electrons transferred, four hydrogen ions are translocated across the cytoplasmic membrane), and thus conserves the redox energy in a proton gradient. This Frankia casuarinae (strain DSM 45818 / CECT 9043 / HFP020203 / CcI3) protein is NADH-quinone oxidoreductase subunit I.